The sequence spans 103 residues: Non-histone chromosomal protein HMG-14B (103 aa).

Residues Met-1–Glu-103 form a disordered region. Positions Val-29–Lys-50 are enriched in basic and acidic residues. Over residues Ala-51–Lys-60 the composition is skewed to basic residues. Residues Ala-94–Glu-103 show a composition bias toward basic and acidic residues.

The protein belongs to the HMGN family.

It is found in the nucleus. Its function is as follows. Binds to the inner side of the nucleosomal DNA thus altering the interaction between the DNA and the histone octamer. May be involved in the process which maintains transcribable genes in a unique chromatin conformation. The chain is Non-histone chromosomal protein HMG-14B (HMG14) from Gallus gallus (Chicken).